A 72-amino-acid polypeptide reads, in one-letter code: Translation initiation factor IF-1 (72 aa).

The region spanning 1–72 (MAKEELLEMR…TKGRITYRFK (72 aa)) is the S1-like domain.

Belongs to the IF-1 family. In terms of assembly, component of the 30S ribosomal translation pre-initiation complex which assembles on the 30S ribosome in the order IF-2 and IF-3, IF-1 and N-formylmethionyl-tRNA(fMet); mRNA recruitment can occur at any time during PIC assembly.

The protein localises to the cytoplasm. Functionally, one of the essential components for the initiation of protein synthesis. Stabilizes the binding of IF-2 and IF-3 on the 30S subunit to which N-formylmethionyl-tRNA(fMet) subsequently binds. Helps modulate mRNA selection, yielding the 30S pre-initiation complex (PIC). Upon addition of the 50S ribosomal subunit IF-1, IF-2 and IF-3 are released leaving the mature 70S translation initiation complex. This Sphingopyxis alaskensis (strain DSM 13593 / LMG 18877 / RB2256) (Sphingomonas alaskensis) protein is Translation initiation factor IF-1.